The sequence spans 477 residues: Cysteine--tRNA ligase (477 aa).

Cys-42 contributes to the Zn(2+) binding site. A 'HIGH' region motif is present at residues 44–54 (ATVQGLPHIGH). Cys-220, His-245, and Glu-249 together coordinate Zn(2+). Positions 276–280 (KMSKS) match the 'KMSKS' region motif. Lys-279 is an ATP binding site.

Belongs to the class-I aminoacyl-tRNA synthetase family. Monomer. Requires Zn(2+) as cofactor.

The protein localises to the cytoplasm. The catalysed reaction is tRNA(Cys) + L-cysteine + ATP = L-cysteinyl-tRNA(Cys) + AMP + diphosphate. The polypeptide is Cysteine--tRNA ligase (Mycolicibacterium smegmatis (strain ATCC 700084 / mc(2)155) (Mycobacterium smegmatis)).